The following is a 716-amino-acid chain: Polyribonucleotide nucleotidyltransferase (716 aa).

2 residues coordinate Mg(2+): Asp495 and Asp501. One can recognise a KH domain in the interval Pro562 to Ile621. The region spanning Gly631 to Lys699 is the S1 motif domain.

The protein belongs to the polyribonucleotide nucleotidyltransferase family. It depends on Mg(2+) as a cofactor.

It localises to the cytoplasm. The enzyme catalyses RNA(n+1) + phosphate = RNA(n) + a ribonucleoside 5'-diphosphate. In terms of biological role, involved in mRNA degradation. Catalyzes the phosphorolysis of single-stranded polyribonucleotides processively in the 3'- to 5'-direction. The protein is Polyribonucleotide nucleotidyltransferase of Synechococcus elongatus (strain ATCC 33912 / PCC 7942 / FACHB-805) (Anacystis nidulans R2).